A 433-amino-acid polypeptide reads, in one-letter code: Tol-Pal system protein TolB (433 aa).

Residues 1–26 (MSLMTKLGFRALVASCLIAAGGAAHA) form the signal peptide.

It belongs to the TolB family. In terms of assembly, the Tol-Pal system is composed of five core proteins: the inner membrane proteins TolA, TolQ and TolR, the periplasmic protein TolB and the outer membrane protein Pal. They form a network linking the inner and outer membranes and the peptidoglycan layer.

The protein resides in the periplasm. Its function is as follows. Part of the Tol-Pal system, which plays a role in outer membrane invagination during cell division and is important for maintaining outer membrane integrity. The chain is Tol-Pal system protein TolB from Burkholderia thailandensis (strain ATCC 700388 / DSM 13276 / CCUG 48851 / CIP 106301 / E264).